We begin with the raw amino-acid sequence, 64 residues long: Small ribosomal subunit protein eS17 (64 aa).

The protein belongs to the eukaryotic ribosomal protein eS17 family.

This is Small ribosomal subunit protein eS17 from Methanocorpusculum labreanum (strain ATCC 43576 / DSM 4855 / Z).